Reading from the N-terminus, the 136-residue chain is Large-conductance mechanosensitive channel (136 aa).

Transmembrane regions (helical) follow at residues 10–30 (FAMR…AAFG) and 76–96 (GAFI…FIAI).

It belongs to the MscL family. In terms of assembly, homopentamer.

The protein resides in the cell inner membrane. In terms of biological role, channel that opens in response to stretch forces in the membrane lipid bilayer. May participate in the regulation of osmotic pressure changes within the cell. The chain is Large-conductance mechanosensitive channel from Pectobacterium atrosepticum (strain SCRI 1043 / ATCC BAA-672) (Erwinia carotovora subsp. atroseptica).